Here is a 102-residue protein sequence, read N- to C-terminus: MEKLKFEIQSVPLTLEKAPVICGVVGSGNLEVLVSQHDQADVCQVEVTTSAVGFQHVWQSVLNEFAQRHAVAGLKLQLNDMGATPAVVNLRLSQAISMFKGE.

S27 carries the post-translational modification O-(phosphoribosyl dephospho-coenzyme A)serine.

It belongs to the MdcC family. In terms of processing, covalently binds the prosthetic group of malonate decarboxylase.

The protein resides in the cytoplasm. Subunit of malonate decarboxylase, it is an acyl carrier protein to which acetyl and malonyl thioester residues are bound via a 2'-(5''-phosphoribosyl)-3'-dephospho-CoA prosthetic group and turn over during the catalytic mechanism. This chain is Malonate decarboxylase acyl carrier protein, found in Acinetobacter calcoaceticus.